The following is a 521-amino-acid chain: Cytochrome P450 monooxygenase gloO (521 aa).

Residues 1-26 form the signal peptide; the sequence is MIAALFTTNLQLGAVGVFIFALLAFA. Residue Cys464 coordinates heme.

It belongs to the cytochrome P450 family. The cofactor is heme.

Its pathway is mycotoxin biosynthesis. Functionally, cytochrome P450 monooxygenase; part of the gene cluster that mediates the biosynthesis of pneumocandins, lipohexapeptides of the echinocandin family that prevent fungal cell wall formation by non-competitive inhibition of beta-1,3-glucan synthase. The 10,12-dimethylmyristoyl side chain is synthesized by the reducing polyketide synthase gloL/GLPKS4. The thioesterase gloN/GLHYD exclusively interacts with gloL/GLPKS4 to maintain turnover of the polyketide side chain. The 10R,12S-dimethylmyristic acid is then transferred to the first thiolation domain of the nonribosomal peptide synthetase gloA/GLNRPS4 by the acyl-AMP ligase gloD/GLligase, followed by its acylation to L-ornithine to trigger elongation of the cyclic hexapeptide. L-ornithine, 4R-hydroxyl-L-proline (generated from L-proline by the dioxygenase gloF/GLOXY2), 3S-hydroxyl-L-homotyrosine (generated by gloG/GLHtyB, gloH/GLHtyA, gloI/GLHtyC, gloJ/GLHtyD and hydroxylated at C-3 by the dioxygenase gloM/GLOXY1), 3R-hydroxyl-L-glutamine (generated from L-glutamine probably by the dioxygenase gloE/GLOXY3) and 3S-hydroxyl-L-proline (generated from L-proline by the dioxygenase gloF/GLOXY2 to yield pneumocandin B0), or 3S-hydroxyl-4S-methyl-L-proline (generated from L-leucine by the dioxygenase gloC/GLOXY4 to yield pneumocandin A0) are sequentially added to the growing chain. The last C domain of gloA/GLNRPS4 is proposed to be responsible for cyclization by condensation to form the peptide bond between L-ornithine and 3S-hydroxyl-4S-methyl-L-proline (for pneumocandin A0) or 3S-hydroxyl-L-proline (for pneumocandin B0). Finally, the subsequent C-4 hydroxylation of 3S-hydroxyl-L-homotyrosine and L-ornithine dihydroxylation at C-4 and C-5 are performed by the cytochrome P450 monooxygenases gloP/GLP450-1 and gloO/GLP450-2, respectively. The polypeptide is Cytochrome P450 monooxygenase gloO (Glarea lozoyensis (strain ATCC 20868 / MF5171)).